A 159-amino-acid chain; its full sequence is MIDSDGFRPNVGIILTNDVGQVLWARRINQDAWQFPQGGINDRESPEEALYRELNEEVGLEEQDVKILACTRGWLRYRLPQRLVRTHSQPLCIGQKQKWFLLRLTGAEDRVRMDLTGKPEFDGWRWVSYWYPLGQVVTFKREVYRRALKELAPRLIVRD.

The Nudix hydrolase domain maps to 6 to 149 (GFRPNVGIIL…KREVYRRALK (144 aa)). The short motif at 38-59 (GGINDRESPEEALYRELNEEVG) is the Nudix box element.

This sequence belongs to the Nudix hydrolase family. RppH subfamily. The cofactor is a divalent metal cation.

Accelerates the degradation of transcripts by removing pyrophosphate from the 5'-end of triphosphorylated RNA, leading to a more labile monophosphorylated state that can stimulate subsequent ribonuclease cleavage. This chain is RNA pyrophosphohydrolase, found in Ectopseudomonas mendocina (strain ymp) (Pseudomonas mendocina).